A 236-amino-acid polypeptide reads, in one-letter code: Small ribosomal subunit protein uS2c (236 aa).

This sequence belongs to the universal ribosomal protein uS2 family.

It localises to the plastid. It is found in the chloroplast. The sequence is that of Small ribosomal subunit protein uS2c (rps2) from Coffea arabica (Arabian coffee).